Reading from the N-terminus, the 602-residue chain is Type II restriction enzyme StsI (602 aa).

It carries out the reaction Endonucleolytic cleavage of DNA to give specific double-stranded fragments with terminal 5'-phosphates.. Its function is as follows. An S subtype restriction enzyme that recognizes the double-stranded sequences 5'-GGATG-3' and 3'-CATCC-5' and cleaves respectively 15 bases after G-1 and 14 bases before C-1. The polypeptide is Type II restriction enzyme StsI (stsIR) (Streptococcus sanguinis).